Consider the following 728-residue polypeptide: Elongation factor 2 (728 aa).

Residues 19–261 enclose the tr-type G domain; it reads EQIRNIAIAA…MVAEHFPNPI (243 aa). GTP is bound by residues 28–35, 94–98, and 148–151; these read AHVDHGKT, DTPGH, and NKVD. Histidine 596 bears the Diphthamide mark.

This sequence belongs to the TRAFAC class translation factor GTPase superfamily. Classic translation factor GTPase family. EF-G/EF-2 subfamily.

The protein localises to the cytoplasm. Functionally, catalyzes the GTP-dependent ribosomal translocation step during translation elongation. During this step, the ribosome changes from the pre-translocational (PRE) to the post-translocational (POST) state as the newly formed A-site-bound peptidyl-tRNA and P-site-bound deacylated tRNA move to the P and E sites, respectively. Catalyzes the coordinated movement of the two tRNA molecules, the mRNA and conformational changes in the ribosome. The protein is Elongation factor 2 of Halobacterium salinarum (strain ATCC 29341 / DSM 671 / R1).